We begin with the raw amino-acid sequence, 107 residues long: MMTRKPTSVGEILQEEFLEPLSLKISDLAQILDVHRNTASNIVNNSSRITLEMAVKLAKVFDTTPEFWLNLQTRIDLWDLEHNKRFQQSLANVKPALHRHDTSTFAM.

The region spanning 13-68 (LQEEFLEPLSLKISDLAQILDVHRNTASNIVNNSSRITLEMAVKLAKVFDTTPEFW) is the HTH cro/C1-type domain. Residues 24–43 (KISDLAQILDVHRNTASNIV) constitute a DNA-binding region (H-T-H motif).

This sequence belongs to the VapA/VapI family.

This is an uncharacterized protein from Haemophilus influenzae (strain ATCC 51907 / DSM 11121 / KW20 / Rd).